The chain runs to 124 residues: Large ribosomal subunit protein bL12 (124 aa).

Over residues Met-102–Glu-116 the composition is skewed to basic and acidic residues. The tract at residues Met-102–Lys-124 is disordered.

Belongs to the bacterial ribosomal protein bL12 family. As to quaternary structure, homodimer. Part of the ribosomal stalk of the 50S ribosomal subunit. Forms a multimeric L10(L12)X complex, where L10 forms an elongated spine to which 2 to 4 L12 dimers bind in a sequential fashion. Binds GTP-bound translation factors.

In terms of biological role, forms part of the ribosomal stalk which helps the ribosome interact with GTP-bound translation factors. Is thus essential for accurate translation. The sequence is that of Large ribosomal subunit protein bL12 from Chromohalobacter salexigens (strain ATCC BAA-138 / DSM 3043 / CIP 106854 / NCIMB 13768 / 1H11).